Here is a 310-residue protein sequence, read N- to C-terminus: tRNA dimethylallyltransferase (310 aa).

Residue 11–18 (GPTGVGKT) participates in ATP binding. 13–18 (TGVGKT) contacts substrate.

This sequence belongs to the IPP transferase family. As to quaternary structure, monomer. Mg(2+) serves as cofactor.

It carries out the reaction adenosine(37) in tRNA + dimethylallyl diphosphate = N(6)-dimethylallyladenosine(37) in tRNA + diphosphate. Functionally, catalyzes the transfer of a dimethylallyl group onto the adenine at position 37 in tRNAs that read codons beginning with uridine, leading to the formation of N6-(dimethylallyl)adenosine (i(6)A). In Latilactobacillus sakei subsp. sakei (strain 23K) (Lactobacillus sakei subsp. sakei), this protein is tRNA dimethylallyltransferase.